We begin with the raw amino-acid sequence, 787 residues long: Vacuolar protein sorting-associated protein 35A (787 aa).

N-acetylmethionine is present on Met-1.

The protein belongs to the VPS35 family. In terms of assembly, component of the retromer complex which consists of VPS29 (MAG1), VPS26 (VPS26A or VPS26B), VPS35 (VPS35A or VPS35B or VPS35C), VPS5/17 (SNX1 or SNX2A or SNX2B). Component of a retromer subcomplex consisting of VPS29 (MAG1), VPS26 (VPS26A or VPS26B), VPS35 (VPS35A or VPS35B or VPS35C). Interacts with RABG3F.

The protein resides in the cytoplasm. It localises to the endosome membrane. Its subcellular location is the prevacuolar compartment membrane. It is found in the golgi apparatus. The protein localises to the trans-Golgi network membrane. In terms of biological role, plays a role in vesicular protein sorting. Component of the membrane-associated retromer complex which is essential in endosome-to-Golgi retrograde transport. Also involved in the efficient sorting of seed storage proteins. Binds alone to endosomal membranes and is required for recruitment of VPS26 and VPS29 to membrane. The VPS29-VPS26-VPS35 subcomplex may be involved in recycling of specific cargos from endosome to the plasma membrane. This Arabidopsis thaliana (Mouse-ear cress) protein is Vacuolar protein sorting-associated protein 35A (VPS35A).